The chain runs to 379 residues: 23S rRNA (uracil(747)-C(5))-methyltransferase RlmC (379 aa).

Positions 3, 11, 14, and 86 each coordinate [4Fe-4S] cluster. The S-adenosyl-L-methionine site is built by Gln-211, Phe-240, Glu-262, and Asn-310. The active-site Nucleophile is the Cys-337.

It belongs to the class I-like SAM-binding methyltransferase superfamily. RNA M5U methyltransferase family. RlmC subfamily.

It catalyses the reaction uridine(747) in 23S rRNA + S-adenosyl-L-methionine = 5-methyluridine(747) in 23S rRNA + S-adenosyl-L-homocysteine + H(+). In terms of biological role, catalyzes the formation of 5-methyl-uridine at position 747 (m5U747) in 23S rRNA. In Halothiobacillus neapolitanus (strain ATCC 23641 / c2) (Thiobacillus neapolitanus), this protein is 23S rRNA (uracil(747)-C(5))-methyltransferase RlmC.